The chain runs to 506 residues: Glutamate--tRNA ligase (506 aa).

A 'HIGH' region motif is present at residues 21 to 31; the sequence is PSPTGTPHVGM. Residues 265–269 carry the 'KMSKS' region motif; sequence KLSKR. Residue lysine 268 coordinates ATP.

Belongs to the class-I aminoacyl-tRNA synthetase family. Glutamate--tRNA ligase type 1 subfamily. In terms of assembly, monomer.

The protein resides in the cytoplasm. It carries out the reaction tRNA(Glu) + L-glutamate + ATP = L-glutamyl-tRNA(Glu) + AMP + diphosphate. Its function is as follows. Catalyzes the attachment of glutamate to tRNA(Glu) in a two-step reaction: glutamate is first activated by ATP to form Glu-AMP and then transferred to the acceptor end of tRNA(Glu). The protein is Glutamate--tRNA ligase of Bifidobacterium longum (strain DJO10A).